A 560-amino-acid chain; its full sequence is Oxygen-dependent choline dehydrogenase (560 aa).

An FAD-binding site is contributed by 6–35 (DYIIIGGGSAGSVLGGRLSEDVSNNVLVLE). H472 acts as the Proton acceptor in catalysis.

It belongs to the GMC oxidoreductase family. The cofactor is FAD.

It catalyses the reaction choline + A = betaine aldehyde + AH2. The catalysed reaction is betaine aldehyde + NAD(+) + H2O = glycine betaine + NADH + 2 H(+). The protein operates within amine and polyamine biosynthesis; betaine biosynthesis via choline pathway; betaine aldehyde from choline (cytochrome c reductase route): step 1/1. In terms of biological role, involved in the biosynthesis of the osmoprotectant glycine betaine. Catalyzes the oxidation of choline to betaine aldehyde and betaine aldehyde to glycine betaine at the same rate. In Staphylococcus xylosus, this protein is Oxygen-dependent choline dehydrogenase.